Consider the following 352-residue polypeptide: Spermidine/putrescine import ATP-binding protein PotA (352 aa).

Residues 7–237 (IELKNVSKKY…PKNKFVANFI (231 aa)) enclose the ABC transporter domain. ATP is bound at residue 39–46 (GPSGCGKT).

It belongs to the ABC transporter superfamily. Spermidine/putrescine importer (TC 3.A.1.11.1) family. The complex is composed of two ATP-binding proteins (PotA), two transmembrane proteins (PotB and PotC) and a solute-binding protein (PotD).

It localises to the cell membrane. The enzyme catalyses ATP + H2O + polyamine-[polyamine-binding protein]Side 1 = ADP + phosphate + polyamineSide 2 + [polyamine-binding protein]Side 1.. Part of the ABC transporter complex PotABCD involved in spermidine/putrescine import. Responsible for energy coupling to the transport system. This chain is Spermidine/putrescine import ATP-binding protein PotA, found in Clostridium acetobutylicum (strain ATCC 824 / DSM 792 / JCM 1419 / IAM 19013 / LMG 5710 / NBRC 13948 / NRRL B-527 / VKM B-1787 / 2291 / W).